Consider the following 398-residue polypeptide: Phosphoglycerate kinase (398 aa).

Substrate is bound by residues 23–25 (DFN), arginine 38, 61–64 (HLGK), arginine 122, and arginine 155. ATP contacts are provided by residues lysine 206, glycine 297, glutamate 328, and 354–357 (GGDS).

This sequence belongs to the phosphoglycerate kinase family. In terms of assembly, monomer.

It localises to the cytoplasm. The enzyme catalyses (2R)-3-phosphoglycerate + ATP = (2R)-3-phospho-glyceroyl phosphate + ADP. The protein operates within carbohydrate degradation; glycolysis; pyruvate from D-glyceraldehyde 3-phosphate: step 2/5. The polypeptide is Phosphoglycerate kinase (Clostridium kluyveri (strain NBRC 12016)).